The primary structure comprises 1415 residues: MVEDEEINDQISEEEEEKKKNNDSDEEMKDIDEEEEEEEEEEEEEEEEEKEEEEEEEEEETPKKPMPPPQSKAKPSSQPPDIKKASQQSQTQKNTPPPIQTSQSSQSSQSSQSSQQQQPKNISQTQQPKNTPPLQSSQTSQTSQKTPVSSNNGIEKRLMITKMVMENFKSYAGAQEVGPFHKCFSSVVGPNGSGKSNVIDAMLFVFGYRAKQIRLNKISELIHNSENHKNLTNGRVSVHFQEIIDLPGEDNYEVVKGSEFVVTRTAQKTGNNKDGVSKYYLNDKVVKLDDLKTILKDKGIDLDNNRFLILQGEVEQIAMMKPKGVHPGEEGLLEYLEDIIGSKKYLPDIEATSKLIEDIGDKRTSSNNRMKVVEKEKDALQQERDNALEYIDKELKLIHCKSIHYQIGRSKPEREKNEIAAKQEMVEKQLEQELVTQKASNDKLLEFEKNLKQQNKQLDELNKQMAKCKNELLTTEKKGVKYKEETKHLKTKVKKNNSVIEEETKKQAEFERSTIIHKQDIVRFEKEYVELPKELIVEEKKLESMLNSLKGEVTELQREMEEKQKQLLPWSKKHSEAKAVVDLKTSELAVLSKDFNGATQNLDDAIKALEDAKTISSTRKNNITKSKKELESVKAIIVDLEKRLASGKVTEENLYRNTMDAKRQLEQIKTNLSENSSRNTILDRLLKIKESGQISGIHGRLGDLGAIDQKYDVAISTAAFSQMDNIIVETTAAAEACVELLRKENLGRATFMILENLEYQRQNLGPVQTPNNTPRLFDLIKMKDEKKYATAFFTAVGHTLVADTLDEATKIAYGAKRHRVVTLDGSLIDTSGAMSGGGLKPRVGAMNSKLKGDPKEDKKKLIELQDNLSQLDSDLRQCRDELVEIENQIQQAQNRRSELELELPKMDMDIKAAITKCEELTKVIPQLKNKAKLSTEKKEQIDSIKESLIVDQKSLDKVQEKVNKLESEVQEIQNSILNVGGPQLKMQKNKVESLQSRIDSNQTNTTKANVQIKSLAKSMEKSIKILNENTKEKDENEAALAEILEKYKSLEKENLKATEAMEAVSEQLREKEEETKEIRKEHEKAKKVIEKIKVSNSKLETQIEEFKTLINEKQAEIADCLSKFANQAKKAKIYKDYVDESLINQVSAILTPEEIEQYMEATEQQNLIAKIHELTTQIQKISKENNVNIEVVKDFQKKEQEYHSRKAEFDEIEKERDNLSKRYESLRKNRLDEFMAGFTIITMKLKEIYQMITLGGDAELEIIDREDPFQEGISFSVRPPKKSWKNISNLSGGEKTLSSLALVFALHHYKPNALYVMDEIDAALDFKNVSIIANYIKERTKNAQFIIISLRNYMFELADRLVGIYKTDNCTKSVTINPNSFTSLSTTTTTTNNSQQQQQQKQQQKQQQQNSTSQK.

Acidic residues-rich tracts occupy residues 1–16 (MVED…EEEE) and 24–60 (SDEE…EEEE). The disordered stretch occupies residues 1 to 154 (MVEDEEINDQ…KTPVSSNNGI (154 aa)). Low complexity-rich tracts occupy residues 71–80 (SKAKPSSQPP) and 100–150 (QTSQ…PVSS). 189–196 (GPNGSGKS) lines the ATP pocket. Coiled-coil stretches lie at residues 361 to 479 (DKRT…EKKG) and 533 to 675 (KELI…LSEN). Residues 695–812 (SGIHGRLGDL…DTLDEATKIA (118 aa)) enclose the SMC hinge domain. 2 coiled-coil regions span residues 855–1120 (KEDK…IADC) and 1162–1233 (TEQQ…RLDE). The disordered stretch occupies residues 1385-1415 (STTTTTTNNSQQQQQQKQQQKQQQQNSTSQK). Over residues 1386–1415 (TTTTTTNNSQQQQQQKQQQKQQQQNSTSQK) the composition is skewed to low complexity.

This sequence belongs to the SMC family. SMC4 subfamily. As to quaternary structure, forms a heterodimer with smc2. Component of the condensin complex, which contains the smc2-smc4 heterodimer.

Its subcellular location is the nucleus. Functionally, central component of the condensin complex, a complex required for conversion of interphase chromatin into mitotic-like condense chromosomes. The condensin complex probably introduces positive supercoils into relaxed DNA in the presence of type I topoisomerases and converts nicked DNA into positive knotted forms in the presence of type II topoisomerases. In Dictyostelium discoideum (Social amoeba), this protein is Structural maintenance of chromosomes protein 4 (smc4).